The sequence spans 326 residues: Lipoyl synthase (326 aa).

[4Fe-4S] cluster-binding residues include cysteine 68, cysteine 73, cysteine 79, cysteine 94, cysteine 98, cysteine 101, and serine 308. Residues 80–297 enclose the Radical SAM core domain; that stretch reads FNHGTATFMI…KDVAMGLGFS (218 aa).

This sequence belongs to the radical SAM superfamily. Lipoyl synthase family. [4Fe-4S] cluster is required as a cofactor.

Its subcellular location is the cytoplasm. The catalysed reaction is [[Fe-S] cluster scaffold protein carrying a second [4Fe-4S](2+) cluster] + N(6)-octanoyl-L-lysyl-[protein] + 2 oxidized [2Fe-2S]-[ferredoxin] + 2 S-adenosyl-L-methionine + 4 H(+) = [[Fe-S] cluster scaffold protein] + N(6)-[(R)-dihydrolipoyl]-L-lysyl-[protein] + 4 Fe(3+) + 2 hydrogen sulfide + 2 5'-deoxyadenosine + 2 L-methionine + 2 reduced [2Fe-2S]-[ferredoxin]. It functions in the pathway protein modification; protein lipoylation via endogenous pathway; protein N(6)-(lipoyl)lysine from octanoyl-[acyl-carrier-protein]: step 2/2. Catalyzes the radical-mediated insertion of two sulfur atoms into the C-6 and C-8 positions of the octanoyl moiety bound to the lipoyl domains of lipoate-dependent enzymes, thereby converting the octanoylated domains into lipoylated derivatives. This is Lipoyl synthase from Aeromonas salmonicida (strain A449).